A 219-amino-acid polypeptide reads, in one-letter code: Small ribosomal subunit protein uS3 (219 aa).

The region spanning 39–108 (IKEFIKKNYF…KVTVKVQEIK (70 aa)) is the KH type-2 domain.

The protein belongs to the universal ribosomal protein uS3 family. Part of the 30S ribosomal subunit. Forms a tight complex with proteins S10 and S14.

In terms of biological role, binds the lower part of the 30S subunit head. Binds mRNA in the 70S ribosome, positioning it for translation. This chain is Small ribosomal subunit protein uS3, found in Fusobacterium nucleatum subsp. nucleatum (strain ATCC 25586 / DSM 15643 / BCRC 10681 / CIP 101130 / JCM 8532 / KCTC 2640 / LMG 13131 / VPI 4355).